Reading from the N-terminus, the 304-residue chain is Small glutamine-rich tetratricopeptide repeat-containing protein beta (304 aa).

4 TPR repeats span residues 15–49 (LREQSQMDAYTSDEQESLEVAIQCLETVFKISPED), 85–118 (ADQLKDEGNNHMKEENYAAAVDCYTQAIELDPNN), 120–152 (VYYCNRAAAQSKLSHYTDAIKDCEKAIAIDSKY), and 153–186 (SKAYGRMGLALTAMNKFEEAVTSYQKALDLDPEN). Lys-131 bears the N6-acetyllysine mark. Phosphoserine occurs at positions 293, 295, and 297.

The protein belongs to the SGT family. Homooligomerize.

Functionally, co-chaperone that binds directly to HSC70 and HSP70 and regulates their ATPase activity. The chain is Small glutamine-rich tetratricopeptide repeat-containing protein beta (Sgtb) from Mus musculus (Mouse).